A 160-amino-acid polypeptide reads, in one-letter code: Cytochrome c-type biogenesis protein CcmE (160 aa).

The Cytoplasmic portion of the chain corresponds to 1 to 8 (MNPRRKKR). Residues 9–29 (LGVVLAILFGLSATIGLIIYA) form a helical; Signal-anchor for type II membrane protein membrane-spanning segment. The Periplasmic portion of the chain corresponds to 30–160 (LNQNMDLFYT…SQEQKQGSDQ (131 aa)). Residues His128 and Tyr132 each coordinate heme.

Belongs to the CcmE/CycJ family.

The protein localises to the cell inner membrane. Its function is as follows. Heme chaperone required for the biogenesis of c-type cytochromes. Transiently binds heme delivered by CcmC and transfers the heme to apo-cytochromes in a process facilitated by CcmF and CcmH. This is Cytochrome c-type biogenesis protein CcmE from Vibrio cholerae serotype O1 (strain ATCC 39541 / Classical Ogawa 395 / O395).